A 474-amino-acid chain; its full sequence is tRNA-2-methylthio-N(6)-dimethylallyladenosine synthase (474 aa).

An MTTase N-terminal domain is found at 3 to 120 (KKLHIKTWGC…LPEMINSVRG (118 aa)). The [4Fe-4S] cluster site is built by Cys-12, Cys-49, Cys-83, Cys-157, Cys-161, and Cys-164. The region spanning 143–375 (RAEGPTAFVS…QERINQQAMA (233 aa)) is the Radical SAM core domain. The TRAM domain occupies 378–441 (RRMLGTVQRI…TNSLRGKIVR (64 aa)).

The protein belongs to the methylthiotransferase family. MiaB subfamily. Monomer. Requires [4Fe-4S] cluster as cofactor.

The protein resides in the cytoplasm. It carries out the reaction N(6)-dimethylallyladenosine(37) in tRNA + (sulfur carrier)-SH + AH2 + 2 S-adenosyl-L-methionine = 2-methylsulfanyl-N(6)-dimethylallyladenosine(37) in tRNA + (sulfur carrier)-H + 5'-deoxyadenosine + L-methionine + A + S-adenosyl-L-homocysteine + 2 H(+). Functionally, catalyzes the methylthiolation of N6-(dimethylallyl)adenosine (i(6)A), leading to the formation of 2-methylthio-N6-(dimethylallyl)adenosine (ms(2)i(6)A) at position 37 in tRNAs that read codons beginning with uridine. The protein is tRNA-2-methylthio-N(6)-dimethylallyladenosine synthase of Klebsiella pneumoniae subsp. pneumoniae (strain ATCC 700721 / MGH 78578).